The primary structure comprises 209 residues: Nucleoside triphosphate pyrophosphatase (209 aa).

Asp-79 (proton acceptor) is an active-site residue.

It belongs to the Maf family. A divalent metal cation is required as a cofactor.

The protein localises to the cytoplasm. It catalyses the reaction a ribonucleoside 5'-triphosphate + H2O = a ribonucleoside 5'-phosphate + diphosphate + H(+). The catalysed reaction is a 2'-deoxyribonucleoside 5'-triphosphate + H2O = a 2'-deoxyribonucleoside 5'-phosphate + diphosphate + H(+). Its function is as follows. Nucleoside triphosphate pyrophosphatase. May have a dual role in cell division arrest and in preventing the incorporation of modified nucleotides into cellular nucleic acids. The polypeptide is Nucleoside triphosphate pyrophosphatase (Mycolicibacterium gilvum (strain PYR-GCK) (Mycobacterium gilvum (strain PYR-GCK))).